The following is a 274-amino-acid chain: Large ribosomal subunit protein uL2cz/uL2cy (274 aa).

Disordered regions lie at residues 1 to 22 (MAIH…DSQV) and 225 to 274 (PVDH…RRSK).

Belongs to the universal ribosomal protein uL2 family. As to quaternary structure, part of the 50S ribosomal subunit.

The protein localises to the plastid. It is found in the chloroplast. The protein is Large ribosomal subunit protein uL2cz/uL2cy (rpl2-A) of Nasturtium officinale (Watercress).